An 86-amino-acid chain; its full sequence is Small ribosomal subunit protein bS18 (86 aa).

This sequence belongs to the bacterial ribosomal protein bS18 family. As to quaternary structure, part of the 30S ribosomal subunit. Forms a tight heterodimer with protein bS6.

Binds as a heterodimer with protein bS6 to the central domain of the 16S rRNA, where it helps stabilize the platform of the 30S subunit. This chain is Small ribosomal subunit protein bS18, found in Heliobacterium modesticaldum (strain ATCC 51547 / Ice1).